Consider the following 156-residue polypeptide: ATP synthase subunit b (156 aa).

The chain crosses the membrane as a helical span at residues 12–32 (VAFFIFVIFCMKFVWPPVIAA).

This sequence belongs to the ATPase B chain family. F-type ATPases have 2 components, F(1) - the catalytic core - and F(0) - the membrane proton channel. F(1) has five subunits: alpha(3), beta(3), gamma(1), delta(1), epsilon(1). F(0) has three main subunits: a(1), b(2) and c(10-14). The alpha and beta chains form an alternating ring which encloses part of the gamma chain. F(1) is attached to F(0) by a central stalk formed by the gamma and epsilon chains, while a peripheral stalk is formed by the delta and b chains.

Its subcellular location is the cell inner membrane. F(1)F(0) ATP synthase produces ATP from ADP in the presence of a proton or sodium gradient. F-type ATPases consist of two structural domains, F(1) containing the extramembraneous catalytic core and F(0) containing the membrane proton channel, linked together by a central stalk and a peripheral stalk. During catalysis, ATP synthesis in the catalytic domain of F(1) is coupled via a rotary mechanism of the central stalk subunits to proton translocation. Its function is as follows. Component of the F(0) channel, it forms part of the peripheral stalk, linking F(1) to F(0). The sequence is that of ATP synthase subunit b from Pseudomonas savastanoi pv. phaseolicola (strain 1448A / Race 6) (Pseudomonas syringae pv. phaseolicola (strain 1448A / Race 6)).